We begin with the raw amino-acid sequence, 159 residues long: NAD(P)H-quinone oxidoreductase subunit J, chloroplastic (159 aa).

Belongs to the complex I 30 kDa subunit family. NDH is composed of at least 16 different subunits, 5 of which are encoded in the nucleus. In terms of tissue distribution, leaves.

It is found in the plastid. Its subcellular location is the chloroplast thylakoid membrane. The catalysed reaction is a plastoquinone + NADH + (n+1) H(+)(in) = a plastoquinol + NAD(+) + n H(+)(out). It carries out the reaction a plastoquinone + NADPH + (n+1) H(+)(in) = a plastoquinol + NADP(+) + n H(+)(out). NDH shuttles electrons from NAD(P)H:plastoquinone, via FMN and iron-sulfur (Fe-S) centers, to quinones in the photosynthetic chain and possibly in a chloroplast respiratory chain. The immediate electron acceptor for the enzyme in this species is believed to be plastoquinone. Couples the redox reaction to proton translocation, and thus conserves the redox energy in a proton gradient. This is NAD(P)H-quinone oxidoreductase subunit J, chloroplastic from Zea mays (Maize).